The sequence spans 264 residues: Thymidylate synthase (264 aa).

Arg-21 is a binding site for dUMP. Residue His-51 coordinates (6R)-5,10-methylene-5,6,7,8-tetrahydrofolate. Residue 126–127 (RR) participates in dUMP binding. Catalysis depends on Cys-146, which acts as the Nucleophile. DUMP is bound by residues 166–169 (RSGD), Asn-177, and 207–209 (HIY). Asp-169 provides a ligand contact to (6R)-5,10-methylene-5,6,7,8-tetrahydrofolate. Ala-263 serves as a coordination point for (6R)-5,10-methylene-5,6,7,8-tetrahydrofolate.

It belongs to the thymidylate synthase family. Bacterial-type ThyA subfamily. Homodimer.

The protein localises to the cytoplasm. It carries out the reaction dUMP + (6R)-5,10-methylene-5,6,7,8-tetrahydrofolate = 7,8-dihydrofolate + dTMP. It participates in pyrimidine metabolism; dTTP biosynthesis. Catalyzes the reductive methylation of 2'-deoxyuridine-5'-monophosphate (dUMP) to 2'-deoxythymidine-5'-monophosphate (dTMP) while utilizing 5,10-methylenetetrahydrofolate (mTHF) as the methyl donor and reductant in the reaction, yielding dihydrofolate (DHF) as a by-product. This enzymatic reaction provides an intracellular de novo source of dTMP, an essential precursor for DNA biosynthesis. The polypeptide is Thymidylate synthase (Sinorhizobium medicae (strain WSM419) (Ensifer medicae)).